The primary structure comprises 473 residues: FAD-dependent monooxygeanse terM (473 aa).

Residues 1–22 form the signal peptide; sequence MSENFKVLIIGGSVAGLTLALC. Positions 34, 48, 107, 303, and 316 each coordinate FAD. The helical transmembrane segment at 441–461 threads the bilayer; the sequence is VLYLICGALLAWWASGLVWHF.

It belongs to the paxM FAD-dependent monooxygenase family. FAD is required as a cofactor.

Its subcellular location is the membrane. It participates in secondary metabolite biosynthesis. FAD-dependent monooxygeanse; part of the gene cluster that mediates the biosynthesis of terpendoles, indole-diterpene (IDT) mycotoxins including terpendole I, terpendole K, terpendole C, as well as the kinesin Eg5 inhibitor terpendole E. Terpendoles biosynthesis begins with the synthesis of geranylgeranyl diphosphate (GGPP) by a yet unidentified GGPP synthase. Condensation of indole-3-glycerol phosphate with GGPP by the prenyltransferase terC then forms 3-geranylgeranylindole (3-GGI), followed by epoxidation and cyclization of this intermediate (by the FAD-dependent monooxygeanse terM and the terpene cyclase terB) to form paspaline. The cytochrome monooxygenase terQ then hydroxylates paspalline at C-11 to yield terpendole E. The cytochrome monooxygenase terP converts terpendole E to 13-desoxyterpendole I, and terQ converts 13-desoxyterpendole I into terpendole I. TerF and terK are required for conversion of terpendole I to terpendole C which is further converted to terpendole K. The polypeptide is FAD-dependent monooxygeanse terM (Tolypocladium album (Soil fungus)).